Here is a 295-residue protein sequence, read N- to C-terminus: Protease HtpX (295 aa).

Helical transmembrane passes span 4–24 and 42–62; these read ILLF…TLSL and QLLV…LFIS. Histidine 147 serves as a coordination point for Zn(2+). Glutamate 148 is an active-site residue. Position 151 (histidine 151) interacts with Zn(2+). 2 helical membrane passes run 158–178 and 199–219; these read VTLA…ARII and ITTI…VMWF. Glutamate 224 provides a ligand contact to Zn(2+).

This sequence belongs to the peptidase M48B family. Zn(2+) is required as a cofactor.

The protein resides in the cell inner membrane. The sequence is that of Protease HtpX from Pseudomonas savastanoi pv. phaseolicola (strain 1448A / Race 6) (Pseudomonas syringae pv. phaseolicola (strain 1448A / Race 6)).